We begin with the raw amino-acid sequence, 631 residues long: DNA mismatch repair protein MutL (631 aa).

It belongs to the DNA mismatch repair MutL/HexB family.

Its function is as follows. This protein is involved in the repair of mismatches in DNA. It is required for dam-dependent methyl-directed DNA mismatch repair. May act as a 'molecular matchmaker', a protein that promotes the formation of a stable complex between two or more DNA-binding proteins in an ATP-dependent manner without itself being part of a final effector complex. The polypeptide is DNA mismatch repair protein MutL (Mannheimia succiniciproducens (strain KCTC 0769BP / MBEL55E)).